The chain runs to 600 residues: Proline--tRNA ligase (600 aa).

The protein belongs to the class-II aminoacyl-tRNA synthetase family. ProS type 1 subfamily. As to quaternary structure, homodimer.

It is found in the cytoplasm. It catalyses the reaction tRNA(Pro) + L-proline + ATP = L-prolyl-tRNA(Pro) + AMP + diphosphate. Its function is as follows. Catalyzes the attachment of proline to tRNA(Pro) in a two-step reaction: proline is first activated by ATP to form Pro-AMP and then transferred to the acceptor end of tRNA(Pro). As ProRS can inadvertently accommodate and process non-cognate amino acids such as alanine and cysteine, to avoid such errors it has two additional distinct editing activities against alanine. One activity is designated as 'pretransfer' editing and involves the tRNA(Pro)-independent hydrolysis of activated Ala-AMP. The other activity is designated 'posttransfer' editing and involves deacylation of mischarged Ala-tRNA(Pro). The misacylated Cys-tRNA(Pro) is not edited by ProRS. In Prochlorococcus marinus (strain MIT 9301), this protein is Proline--tRNA ligase.